Consider the following 77-residue polypeptide: uncharacterized protein (77 aa).

Residues 53-77 (KRVSSEANKEKSDITELLRKQVRPD) are disordered.

This is an uncharacterized protein from Escherichia coli (strain K12).